The sequence spans 310 residues: Thiamine-monophosphate kinase (310 aa).

The Mg(2+) site is built by Asp-26, Thr-40, Ser-41, and Asp-42. A substrate-binding site is contributed by Asp-49. Residues Asp-70 and Asp-118 each contribute to the Mg(2+) site. ATP is bound by residues 117–118 (GD) and Arg-141. Position 202 (Asp-202) interacts with Mg(2+). Position 204 (Ser-204) interacts with ATP. Asp-205 is a binding site for Mg(2+). Glu-251 and Trp-299 together coordinate substrate.

The protein belongs to the thiamine-monophosphate kinase family.

It carries out the reaction thiamine phosphate + ATP = thiamine diphosphate + ADP. It functions in the pathway cofactor biosynthesis; thiamine diphosphate biosynthesis; thiamine diphosphate from thiamine phosphate: step 1/1. Its function is as follows. Catalyzes the ATP-dependent phosphorylation of thiamine-monophosphate (TMP) to form thiamine-pyrophosphate (TPP), the active form of vitamin B1. The polypeptide is Thiamine-monophosphate kinase (Pyrococcus abyssi (strain GE5 / Orsay)).